A 370-amino-acid chain; its full sequence is tRNA (guanine(26)-N(2))-dimethyltransferase (370 aa).

In terms of domain architecture, Trm1 methyltransferase spans 4–368; the sequence is TWVTEGRTTI…APLEEIRDCI (365 aa). R41, R66, D82, D108, and A109 together coordinate S-adenosyl-L-methionine. Residues C237, C240, C256, and C259 each contribute to the Zn(2+) site.

This sequence belongs to the class I-like SAM-binding methyltransferase superfamily. Trm1 family.

It carries out the reaction guanosine(26) in tRNA + 2 S-adenosyl-L-methionine = N(2)-dimethylguanosine(26) in tRNA + 2 S-adenosyl-L-homocysteine + 2 H(+). In terms of biological role, dimethylates a single guanine residue at position 26 of a number of tRNAs using S-adenosyl-L-methionine as donor of the methyl groups. In Methanospirillum hungatei JF-1 (strain ATCC 27890 / DSM 864 / NBRC 100397 / JF-1), this protein is tRNA (guanine(26)-N(2))-dimethyltransferase.